The primary structure comprises 506 residues: BTB/POZ domain-containing protein 16 (506 aa).

The region spanning 150-206 (INDPAVTRVAFALALKNLYMNEVEMTVDNVLGVLASAHILQFNRLFRKCVSTMLNRL) is the BTB domain.

The polypeptide is BTB/POZ domain-containing protein 16 (Btbd16) (Rattus norvegicus (Rat)).